The primary structure comprises 299 residues: Pyridoxal 5'-phosphate synthase subunit PdxS (299 aa).

Residue Asp24 participates in D-ribose 5-phosphate binding. The Schiff-base intermediate with D-ribose 5-phosphate role is filled by Lys81. Gly153 contacts D-ribose 5-phosphate. A D-glyceraldehyde 3-phosphate-binding site is contributed by Arg165. D-ribose 5-phosphate-binding positions include Gly219 and 240–241 (GS).

It belongs to the PdxS/SNZ family. As to quaternary structure, in the presence of PdxT, forms a dodecamer of heterodimers.

It carries out the reaction aldehydo-D-ribose 5-phosphate + D-glyceraldehyde 3-phosphate + L-glutamine = pyridoxal 5'-phosphate + L-glutamate + phosphate + 3 H2O + H(+). It functions in the pathway cofactor biosynthesis; pyridoxal 5'-phosphate biosynthesis. Its function is as follows. Catalyzes the formation of pyridoxal 5'-phosphate from ribose 5-phosphate (RBP), glyceraldehyde 3-phosphate (G3P) and ammonia. The ammonia is provided by the PdxT subunit. Can also use ribulose 5-phosphate and dihydroxyacetone phosphate as substrates, resulting from enzyme-catalyzed isomerization of RBP and G3P, respectively. The chain is Pyridoxal 5'-phosphate synthase subunit PdxS from Methanococcus aeolicus (strain ATCC BAA-1280 / DSM 17508 / OCM 812 / Nankai-3).